The following is a 503-amino-acid chain: Long-chain-fatty-acid--CoA ligase FadD13 (503 aa).

The protein belongs to the ATP-dependent AMP-binding enzyme family. Homodimer.

The protein resides in the cell membrane. The enzyme catalyses a long-chain fatty acid + ATP + CoA = a long-chain fatty acyl-CoA + AMP + diphosphate. The protein operates within lipid metabolism; fatty acid biosynthesis. Functionally, required for maintaining the appropriate mycolic acid composition and permeability of the envelope on its exposure to acidic pH. Catalyzes the activation of long-chain fatty acids as acyl-coenzyme A (acyl-CoA), which are then transferred to the multifunctional polyketide synthase (PKS) type III for further chain extension. The chain is Long-chain-fatty-acid--CoA ligase FadD13 (fadD13) from Mycobacterium tuberculosis (strain CDC 1551 / Oshkosh).